A 287-amino-acid chain; its full sequence is Large ribosomal subunit protein uL2 (287 aa).

The tract at residues 222-266 (RGIRPTVRGSAMNPNDHPHGGGEGRSPVGRDAPRTPWGKRHMGVK) is disordered.

Belongs to the universal ribosomal protein uL2 family. In terms of assembly, part of the 50S ribosomal subunit. Forms a bridge to the 30S subunit in the 70S ribosome.

In terms of biological role, one of the primary rRNA binding proteins. Required for association of the 30S and 50S subunits to form the 70S ribosome, for tRNA binding and peptide bond formation. It has been suggested to have peptidyltransferase activity; this is somewhat controversial. Makes several contacts with the 16S rRNA in the 70S ribosome. This chain is Large ribosomal subunit protein uL2, found in Mycoplasma pneumoniae (strain ATCC 29342 / M129 / Subtype 1) (Mycoplasmoides pneumoniae).